A 587-amino-acid polypeptide reads, in one-letter code: Monocopper oxidase-like protein SKU5 (587 aa).

The N-terminal stretch at 1 to 20 is a signal peptide; it reads MDLFKILLLVFFVNISFCFA. N-linked (GlcNAc...) asparagine glycosylation is found at Asn-14 and Asn-58. His-80 is a Cu cation binding site. 10 N-linked (GlcNAc...) asparagine glycosylation sites follow: Asn-107, Asn-169, Asn-200, Asn-257, Asn-278, Asn-293, Asn-342, Asn-362, Asn-430, and Asn-444. Residue His-452 coordinates Cu cation. N-linked (GlcNAc...) asparagine glycosylation is present at Asn-534. A lipid anchor (GPI-anchor amidated serine) is attached at Ser-562. Residues 563 to 587 constitute a propeptide, removed in mature form; that stretch reads ASKSIGFTSLSMVVMALVMMMMLQH.

It belongs to the multicopper oxidase family. Requires Cu cation as cofactor. As to expression, expressed in roots, hypocotyls, cotyledons, leaves, stems and flowers.

Its subcellular location is the secreted. The protein localises to the cell wall. It is found in the cell membrane. In terms of biological role, may be a monocopper oxidase of unknown specificity. Involved in directional growth processes, possibly by participating in cell wall expansion. In Arabidopsis thaliana (Mouse-ear cress), this protein is Monocopper oxidase-like protein SKU5 (SKU5).